Reading from the N-terminus, the 297-residue chain is 4-diphosphocytidyl-2-C-methyl-D-erythritol kinase (297 aa).

Lysine 10 is a catalytic residue. 94-104 serves as a coordination point for ATP; the sequence is PVAAGLAGGSS. Aspartate 136 is an active-site residue.

Belongs to the GHMP kinase family. IspE subfamily.

It catalyses the reaction 4-CDP-2-C-methyl-D-erythritol + ATP = 4-CDP-2-C-methyl-D-erythritol 2-phosphate + ADP + H(+). It participates in isoprenoid biosynthesis; isopentenyl diphosphate biosynthesis via DXP pathway; isopentenyl diphosphate from 1-deoxy-D-xylulose 5-phosphate: step 3/6. Its function is as follows. Catalyzes the phosphorylation of the position 2 hydroxy group of 4-diphosphocytidyl-2C-methyl-D-erythritol. This chain is 4-diphosphocytidyl-2-C-methyl-D-erythritol kinase, found in Shouchella clausii (strain KSM-K16) (Alkalihalobacillus clausii).